Here is a 319-residue protein sequence, read N- to C-terminus: tRNA-cytidine(32) 2-sulfurtransferase (319 aa).

Residues Ser43–Ser48 carry the PP-loop motif motif. Cys118, Cys121, and Cys209 together coordinate [4Fe-4S] cluster.

The protein belongs to the TtcA family. As to quaternary structure, homodimer. Requires Mg(2+) as cofactor. It depends on [4Fe-4S] cluster as a cofactor.

It is found in the cytoplasm. The enzyme catalyses cytidine(32) in tRNA + S-sulfanyl-L-cysteinyl-[cysteine desulfurase] + AH2 + ATP = 2-thiocytidine(32) in tRNA + L-cysteinyl-[cysteine desulfurase] + A + AMP + diphosphate + H(+). The protein operates within tRNA modification. In terms of biological role, catalyzes the ATP-dependent 2-thiolation of cytidine in position 32 of tRNA, to form 2-thiocytidine (s(2)C32). The sulfur atoms are provided by the cysteine/cysteine desulfurase (IscS) system. The polypeptide is tRNA-cytidine(32) 2-sulfurtransferase (Neisseria meningitidis serogroup A / serotype 4A (strain DSM 15465 / Z2491)).